A 369-amino-acid polypeptide reads, in one-letter code: Geranylgeranyl pyrophosphate synthase, chloroplastic (369 aa).

Isopentenyl diphosphate is bound by residues lysine 118, arginine 121, and histidine 150. The Mg(2+) site is built by aspartate 157 and aspartate 163. Residue arginine 168 coordinates dimethylallyl diphosphate. Residue arginine 169 coordinates isopentenyl diphosphate. Dimethylallyl diphosphate-binding residues include lysine 254, threonine 255, glutamine 292, lysine 309, and lysine 319.

It belongs to the FPP/GGPP synthase family. As to quaternary structure, monomer. Mg(2+) serves as cofactor.

Its subcellular location is the plastid. It is found in the chloroplast. The enzyme catalyses isopentenyl diphosphate + dimethylallyl diphosphate = (2E)-geranyl diphosphate + diphosphate. It carries out the reaction isopentenyl diphosphate + (2E)-geranyl diphosphate = (2E,6E)-farnesyl diphosphate + diphosphate. The catalysed reaction is isopentenyl diphosphate + (2E,6E)-farnesyl diphosphate = (2E,6E,10E)-geranylgeranyl diphosphate + diphosphate. The protein operates within isoprenoid biosynthesis; farnesyl diphosphate biosynthesis; farnesyl diphosphate from geranyl diphosphate and isopentenyl diphosphate: step 1/1. It functions in the pathway isoprenoid biosynthesis; geranyl diphosphate biosynthesis; geranyl diphosphate from dimethylallyl diphosphate and isopentenyl diphosphate: step 1/1. It participates in isoprenoid biosynthesis; geranylgeranyl diphosphate biosynthesis; geranylgeranyl diphosphate from farnesyl diphosphate and isopentenyl diphosphate: step 1/1. Its function is as follows. Catalyzes the trans-addition of the three molecules of IPP onto DMAPP to form geranylgeranyl pyrophosphate. The sequence is that of Geranylgeranyl pyrophosphate synthase, chloroplastic from Capsicum annuum (Capsicum pepper).